The chain runs to 325 residues: MNALTAVQNNAVDSDQDYSGFTLIPSAQSPRLLELTFTEQTTKQFLEQVAEWPVQALEYKSFLRFRVGKILDDLCANQLQPLLLKTLLNRAEGALLINAVGVDDVKQADEMVKLATAVAHLIGRSNFDAMSGQYYARFVVKNVDNSDSYLRQPHRVMELHNDGTYVEEITDYVLMMKIDEQNMQGGNSLLLHLDDWEHLDHYFRHPMARRPMRFAAPPSKNVSKDVFHPVFDVDQQGRPVMRYIDQFVQPKDFEEGVWLSELSDAIEISKGILSVPVPVGKFLLINNLFWLHGRDRFTPHPDLRRELMRQRGYFAYATHHYQTHQ.

Fe cation-binding residues include histidine 160, aspartate 162, and histidine 292.

It belongs to the glutarate hydroxylase family. Homotetramer. Requires Fe(2+) as cofactor.

It catalyses the reaction glutarate + 2-oxoglutarate + O2 = (S)-2-hydroxyglutarate + succinate + CO2. It functions in the pathway amino-acid degradation. Acts as an alpha-ketoglutarate-dependent dioxygenase catalyzing hydroxylation of glutarate (GA) to L-2-hydroxyglutarate (L2HG). Functions in a L-lysine degradation pathway that proceeds via cadaverine, glutarate and L-2-hydroxyglutarate. The protein is Glutarate 2-hydroxylase of Escherichia coli O157:H7.